The sequence spans 25 residues: Cysteine protease inhibitor 2 (25 aa).

This sequence belongs to the protease inhibitor I3 (leguminous Kunitz-type inhibitor) family. In terms of tissue distribution, cortex of tuber.

In terms of biological role, inhibitor of subtilisin. Inhibits moderately trypsin and chymotrypsin (serine proteases). May protect the plant by inhibiting proteases of invading organisms. The protein is Cysteine protease inhibitor 2 of Solanum tuberosum (Potato).